The primary structure comprises 403 residues: Zinc finger CCHC domain-containing protein 3 (403 aa).

Positions 1-158 (MATGGGAEEE…PLQDEPAAAA (158 aa)) are disordered. 2 stretches are compositionally biased toward basic and acidic residues: residues 26 to 38 (ARGE…REKM) and 47 to 65 (LAEK…REEE). The segment covering 67–79 (GGGGGSAGLGGPA) has biased composition (gly residues). The segment covering 95-121 (GDPKGRRRDPAGEAVDPRKKKGAAEAG) has biased composition (basic and acidic residues). Low complexity predominate over residues 128–139 (AAAAAMATPARP). At Tyr-201 the chain carries Phosphotyrosine. CCHC-type zinc fingers lie at residues 335–350 (CFKC…SCTQ), 352–368 (RCFR…YCRK), and 372–387 (CNLC…QCPK).

As to quaternary structure, interacts with CGAS. Interacts with RIGI. Interacts with IFIH1/MDA5.

The protein resides in the cytoplasm. In terms of biological role, nucleic acid-binding protein involved in innate immune response to DNA and RNA viruses. Binds DNA and RNA in the cytoplasm and acts by promoting recognition of viral nucleic acids by virus sensors, such as RIGI, IFIH1/MDA5 and CGAS. Acts as a co-sensor for recognition of double-stranded DNA (dsDNA) by cGAS in the cytoplasm, thereby playing a role in innate immune response to cytosolic dsDNA and DNA virus. Binds dsDNA and probably acts by promoting sensing of dsDNA by CGAS, leading to enhance CGAS oligomerization and activation. Promotes sensing of viral RNA by RIGI-like receptors proteins RIGI and IFIH1/MDA5 via two mechanisms: binds double-stranded RNA (dsRNA), enhancing the binding of RIGI and IFIH1/MDA5 to dsRNA and promotes 'Lys-63'-linked ubiquitination and subsequent activation of RIGI and IFIH1/MDA5. The protein is Zinc finger CCHC domain-containing protein 3 of Homo sapiens (Human).